The following is a 442-amino-acid chain: Hydroxycinnamoyltransferase 1 (442 aa).

Residues His159 and Asp389 each act as proton acceptor in the active site.

It belongs to the plant acyltransferase family. In terms of tissue distribution, expressed in roots, leaves, stems and seeds.

Hydroxycinnamoyl transferase that catalyzes the transfer of an acyl from p-coumaryol-CoA to various acyl acceptors. Can use feruloyl-CoA and caffeoyl-CoA as acyl donors. The protein is Hydroxycinnamoyltransferase 1 of Oryza sativa subsp. japonica (Rice).